The chain runs to 329 residues: 4-methyl-2-oxopentanoate reductase A (329 aa).

Residues 162-163 (GI), 240-242 (TAR), and aspartate 266 contribute to the NAD(+) site. Arginine 242 is a catalytic residue. The active site involves glutamate 271. The Proton donor role is filled by histidine 289.

It belongs to the D-isomer specific 2-hydroxyacid dehydrogenase family.

The catalysed reaction is (2R)-hydroxy-4-methylpentanoate + NADP(+) = 4-methyl-2-oxopentanoate + NADPH + H(+). The enzyme catalyses a (2R)-2-hydroxycarboxylate + NADP(+) = a 2-oxocarboxylate + NADPH + H(+). Functionally, 4-methyl-2-oxopentanoate (MOA) reductase that reduces MOA, a possible intermediate in leucine synthesis, to D-leucate in a NADPH- or NADH-dependent manner, but with a preference for NADPH. In addition to MOA, shows broad substrate specificity toward 2-keto acids. The sequence is that of 4-methyl-2-oxopentanoate reductase A from Aspergillus oryzae (strain ATCC 42149 / RIB 40) (Yellow koji mold).